The primary structure comprises 185 residues: Large ribosomal subunit protein uL15 (185 aa).

The disordered stretch occupies residues 1-51 (MDLSSLRPAAGAVKNKKRVGRGQGSGNGTTAGKGNKGQQARSGYQKPINEG). Residues 21 to 35 (RGQGSGNGTTAGKGN) show a composition bias toward gly residues.

Belongs to the universal ribosomal protein uL15 family. As to quaternary structure, part of the 50S ribosomal subunit.

Its function is as follows. Binds to the 23S rRNA. The sequence is that of Large ribosomal subunit protein uL15 from Chlorobium phaeobacteroides (strain DSM 266 / SMG 266 / 2430).